The sequence spans 646 residues: Stage V sporulation protein D (646 aa).

The active-site Acyl-ester intermediate is Ser-294. One can recognise a PASTA domain in the interval 580–638 (DTKTIEVPNVVGMSVSDLESLLVNLNVDASGKGSKIVKQSPAAGTKVKEGSKIRVYLTE).

Belongs to the transpeptidase family.

The protein localises to the cell membrane. It carries out the reaction Preferential cleavage: (Ac)2-L-Lys-D-Ala-|-D-Ala. Also transpeptidation of peptidyl-alanyl moieties that are N-acyl substituents of D-alanine.. Its pathway is cell wall biogenesis; peptidoglycan biosynthesis. Functionally, penicillin-binding protein with an unknown catalytic activity. May have a specialized role in the morphogenesis of spore cortex, which is a modified form of peptidoglycan. Spore cortex formation is determined primarily by the mother cell. This chain is Stage V sporulation protein D (spoVD), found in Bacillus subtilis (strain 168).